Here is a 397-residue protein sequence, read N- to C-terminus: P2X purinoceptor 3 (397 aa).

Over 1 to 20 (MNCISDFFTYETTKSVVVKS) the chain is Cytoplasmic. Residues 21 to 43 (WTIGIINRVVQLLIISYFVGWVF) form a helical membrane-spanning segment. Over 44-322 (LHEKAYQVRD…AGKFNIIPTI (279 aa)) the chain is Extracellular. Lys-63 and Lys-65 together coordinate ATP. 3 cysteine pairs are disulfide-bonded: Cys-107/Cys-153, Cys-116/Cys-137, and Cys-122/Cys-147. Glu-111 contacts Mg(2+). Asn-139 is a glycosylation site (N-linked (GlcNAc...) asparagine). Asp-158 is a binding site for Mg(2+). Asp-158 provides a ligand contact to Ca(2+). Asn-170 is a glycosylation site (N-linked (GlcNAc...) asparagine). ATP is bound at residue Thr-172. The N-linked (GlcNAc...) asparagine glycan is linked to Asn-194. 2 cysteine pairs are disulfide-bonded: Cys-203–Cys-213 and Cys-247–Cys-256. The ATP site is built by Ser-275, Asn-279, and Arg-281. Residue Asn-290 is glycosylated (N-linked (GlcNAc...) asparagine). ATP is bound at residue Lys-299. The helical transmembrane segment at 323–341 (ISSVAAFTSVGVGTVLCDI) threads the bilayer. Over 342 to 397 (ILLNFLKGADQYKAKKFEEVNETTLKIAALTNPVYPSDQTTAEKQSTDSGAFSIGH) the chain is Cytoplasmic. Residues 378-391 (SDQTTAEKQSTDSG) are compositionally biased toward polar residues. The disordered stretch occupies residues 378–397 (SDQTTAEKQSTDSGAFSIGH).

The protein belongs to the P2X receptor family. As to quaternary structure, homotrimer. Forms heterotrimer with P2RX2. Heterotrimeric P2RX2/3 has a ligand dose-response profile that is distinct from either homotrimeric P2RX2 or P2RX3.

The protein localises to the cell membrane. The catalysed reaction is Ca(2+)(in) = Ca(2+)(out). It catalyses the reaction Na(+)(in) = Na(+)(out). Has high sensitivity to ATP. Fast activation by external ATP. Exhibits rapid desensitization. Sensitives to the ATP agonist:alpha/beta-methylene-ATP. Subject to allosteric inhibition by AF-219. Mg(2+) and Ca(2+) slow deactivation of P2RX3. In terms of biological role, extracellular ATP-activated non-selective cation channel. Plays particularly important role in sensory neurons where its activation is critical for gustatory, nociceptive responses, visceral reflexes and sensory hypersensitization. The protein is P2X purinoceptor 3 (P2RX3) of Homo sapiens (Human).